A 27-amino-acid polypeptide reads, in one-letter code: Small ribosomal subunit protein bTHX (27 aa).

Over residues 1-13 (MGKGDRRTRRGKI) the composition is skewed to basic residues. The disordered stretch occupies residues 1–27 (MGKGDRRTRRGKIWRGTYGKYRPRKKK).

It belongs to the bacterial ribosomal protein bTHX family. In terms of assembly, part of the 30S ribosomal subunit.

Functionally, binds at the top of the head of the 30S subunit. It stabilizes a number of different RNA elements and thus is important for subunit structure. This is Small ribosomal subunit protein bTHX (rpsU) from Thermus aquaticus.